Reading from the N-terminus, the 391-residue chain is Protein Wnt-2b (391 aa).

5 disulfide bridges follow: Cys-107–Cys-118, Cys-158–Cys-166, Cys-168–Cys-188, Cys-237–Cys-251, and Cys-239–Cys-246. N-linked (GlcNAc...) asparagine glycosylation occurs at Asn-117. A lipid anchor (O-palmitoleoyl serine; by PORCN) is attached at Ser-243. Asn-283 carries N-linked (GlcNAc...) asparagine glycosylation. Cystine bridges form between Cys-309/Cys-340, Cys-325/Cys-335, Cys-339/Cys-379, Cys-355/Cys-370, Cys-357/Cys-367, and Cys-362/Cys-363.

It belongs to the Wnt family. Forms a soluble 1:1 complex with AFM; this prevents oligomerization and is required for prolonged biological activity. The complex with AFM may represent the physiological form in body fluids. Interacts with FZD4 and FZD5. Post-translationally, palmitoleoylation is required for efficient binding to frizzled receptors. Depalmitoleoylation leads to Wnt signaling pathway inhibition. In terms of tissue distribution, isoform 1 is expressed in adult heart, brain, placenta, lung, prostate, testis, ovary, small intestine and colon. In the adult brain, it is mainly found in the caudate nucleus, subthalamic nucleus and thalamus. Also detected in fetal brain, lung and kidney. Isoform 2 is expressed in fetal brain, fetal lung, fetal kidney, caudate nucleus, testis and cancer cell lines.

The protein localises to the secreted. The protein resides in the extracellular space. Its subcellular location is the extracellular matrix. Functionally, ligand for members of the frizzled family of seven transmembrane receptors. Functions in the canonical Wnt/beta-catenin signaling pathway. Plays a redundant role in embryonic lung development. The polypeptide is Protein Wnt-2b (WNT2B) (Homo sapiens (Human)).